The primary structure comprises 454 residues: Bifunctional protein GlmU (454 aa).

The pyrophosphorylase stretch occupies residues 1–226; the sequence is MSLEIVILAA…AMEVQGVNDR (226 aa). Residues 8–11, K22, Q73, 78–79, 99–101, G136, E151, N166, and N224 each bind UDP-N-acetyl-alpha-D-glucosamine; these read LAAG, GT, and YGD. D101 provides a ligand contact to Mg(2+). Residue N224 participates in Mg(2+) binding. Residues 227 to 247 are linker; it reads MQQAQLERHYQRLRAEELMRQ. The interval 248–454 is N-acetyltransferase; the sequence is GVTLLDPQRL…NWKRPEKIKK (207 aa). 2 residues coordinate UDP-N-acetyl-alpha-D-glucosamine: R330 and K348. H360 serves as the catalytic Proton acceptor. UDP-N-acetyl-alpha-D-glucosamine contacts are provided by Y363 and N374. Residues A377, 383–384, S402, A420, and R437 contribute to the acetyl-CoA site; that span reads NY.

It in the N-terminal section; belongs to the N-acetylglucosamine-1-phosphate uridyltransferase family. In the C-terminal section; belongs to the transferase hexapeptide repeat family. In terms of assembly, homotrimer. Requires Mg(2+) as cofactor.

Its subcellular location is the cytoplasm. It catalyses the reaction alpha-D-glucosamine 1-phosphate + acetyl-CoA = N-acetyl-alpha-D-glucosamine 1-phosphate + CoA + H(+). The enzyme catalyses N-acetyl-alpha-D-glucosamine 1-phosphate + UTP + H(+) = UDP-N-acetyl-alpha-D-glucosamine + diphosphate. The protein operates within nucleotide-sugar biosynthesis; UDP-N-acetyl-alpha-D-glucosamine biosynthesis; N-acetyl-alpha-D-glucosamine 1-phosphate from alpha-D-glucosamine 6-phosphate (route II): step 2/2. It functions in the pathway nucleotide-sugar biosynthesis; UDP-N-acetyl-alpha-D-glucosamine biosynthesis; UDP-N-acetyl-alpha-D-glucosamine from N-acetyl-alpha-D-glucosamine 1-phosphate: step 1/1. Its pathway is bacterial outer membrane biogenesis; LPS lipid A biosynthesis. Catalyzes the last two sequential reactions in the de novo biosynthetic pathway for UDP-N-acetylglucosamine (UDP-GlcNAc). The C-terminal domain catalyzes the transfer of acetyl group from acetyl coenzyme A to glucosamine-1-phosphate (GlcN-1-P) to produce N-acetylglucosamine-1-phosphate (GlcNAc-1-P), which is converted into UDP-GlcNAc by the transfer of uridine 5-monophosphate (from uridine 5-triphosphate), a reaction catalyzed by the N-terminal domain. The polypeptide is Bifunctional protein GlmU (Pseudomonas aeruginosa (strain ATCC 15692 / DSM 22644 / CIP 104116 / JCM 14847 / LMG 12228 / 1C / PRS 101 / PAO1)).